We begin with the raw amino-acid sequence, 466 residues long: MSQGSIVQCIGAVVDIHFPRDAMPKVYDALKLDASEANGMAEDGLTFEVQQQLGDGVVRTIAMGSSDGLRRGMKVNNTGAGISVPVGMGTLGRIMDVLGRPIDEAGPIDSTELRVIHQPAPKFDELSSSVDLLETGIKVIDLICPFAKGGKVGLFGGAGVGKTVNMMELINNIAKQHAGLSVFAGVGERTREGNDFYHEMKDSNVLDKVAMVFGQMNEPPGNRLRVALTGLTMAERFRDDGRDILFFVDNIYRYTLAGTEVSALLGRMPSAVGYQPTLAEEMGRLQERITSTKVGSITSIQAVYVPADDLTDPSPATTFLHLDSTVVLSRDIASLGIYPAVDPLDSTSRQLDPQVVGEEHYSVARAVQMNLQRYKELRDIIAILGMDELSPEDKLAVSRARKIQRFLSQPFHVAEVFTGSPGKFVSLKETIKGFKGICAGEYDHLPEQAFYMVGGIEEVIEKAKTL.

156 to 163 (GGAGVGKT) provides a ligand contact to ATP.

Belongs to the ATPase alpha/beta chains family. In terms of assembly, F-type ATPases have 2 components, CF(1) - the catalytic core - and CF(0) - the membrane proton channel. CF(1) has five subunits: alpha(3), beta(3), gamma(1), delta(1), epsilon(1). CF(0) has three main subunits: a(1), b(2) and c(9-12). The alpha and beta chains form an alternating ring which encloses part of the gamma chain. CF(1) is attached to CF(0) by a central stalk formed by the gamma and epsilon chains, while a peripheral stalk is formed by the delta and b chains.

It localises to the cell inner membrane. The enzyme catalyses ATP + H2O + 4 H(+)(in) = ADP + phosphate + 5 H(+)(out). Its function is as follows. Produces ATP from ADP in the presence of a proton gradient across the membrane. The catalytic sites are hosted primarily by the beta subunits. This chain is ATP synthase subunit beta, found in Dechloromonas aromatica (strain RCB).